Here is a 422-residue protein sequence, read N- to C-terminus: Tyrosine--tRNA ligase (422 aa).

An L-tyrosine-binding site is contributed by Tyr-34. Residues 39–48 (PTEDSLHVGH) carry the 'HIGH' region motif. Residues Tyr-172 and Gln-176 each coordinate L-tyrosine. A 'KMSKS' region motif is present at residues 232–236 (KFGKT). ATP is bound at residue Lys-235. Residues 354–412 (KDLQEALVLSSLAQSRTQAKNMIISNSISINTKKIVNKNYIIDDNDKLFNQFTLLSRGK) form the S4 RNA-binding domain.

It belongs to the class-I aminoacyl-tRNA synthetase family. TyrS type 1 subfamily. Homodimer.

The protein localises to the cytoplasm. It catalyses the reaction tRNA(Tyr) + L-tyrosine + ATP = L-tyrosyl-tRNA(Tyr) + AMP + diphosphate + H(+). Its function is as follows. Catalyzes the attachment of tyrosine to tRNA(Tyr) in a two-step reaction: tyrosine is first activated by ATP to form Tyr-AMP and then transferred to the acceptor end of tRNA(Tyr). This Buchnera aphidicola subsp. Schizaphis graminum (strain Sg) protein is Tyrosine--tRNA ligase.